Here is a 1277-residue protein sequence, read N- to C-terminus: MSARGPAFGLLLLLLCPVQVFSQSCVWYGECGIASGDKRYNCRYSGPPKPLPEDGYDLVQELCPGFFFGNVSLCCDVQQLRTLKDNLQLPLQFLSRCPSCFYNLMNLFCELTCSPRQSQFLNVTATEDYVDPVTNQTKTNVKELEYYVGETFANAMYNACRDVEAPSSNEKALGLLCGREAQACNATNWIEYMFNKDNGQAPFTITPIFSDLPTHGMEPMNNATKGCDESVDEVTGPCSCQDCSIVCGPKPQPPPPPVPWRILGLDAMYVIMWSSYMAFLIVFFGAFFAVWCYRKRYFVSEYTPIDGNIAFSVNSSDKGQAFCCDPLGAAFERGLRRLFAQWGAFCVRHPGCVVFFSLAFIVACSSGLVFIRVTTDPVDLWSAPGSQARREKEYFDTHFGPFFRMEQLIIRATNNQSHIYHPYPAGADVPFGPPLSRDILHQVLDLQTAIENITASYNNETVTLQDICLAPLSPYNKNCTILSVLNYFQNSHSVLDHQVGDFFFVYADYHTHFLYCVRAPASLNDASLLHDPCLGTFGGPVFPWLVLGGYDDQNYNNATALVITFPVNNYYNDTEKLQRAQAWESEFINFVKNYKNPNLTISFMAERSIEDELNRESNSDLFTILISYAIMFLYISIALGHIKSCSRLLVDSKISLGIAGILIVLSSVACSLGIFSYIGVPLTLIVIEVIPFLVLAVGVDNIFILVQTYQRDERLQGETLDQQLGRVLGEVAPSMFLSSFSETVAFFLGGLSVVPAVHTFSLFAGMAVLIDFLLQITCFVSLLGLDIKRQEKNRLDVVCCVQGAEDGAGVQASESCLFRFFKNSYAPLLLKDWMRPIVIAVFVGVLSFSIAVLNKVEIGLDQSLSMPDDSYVMDYFQSLSRYLHAGPPVYFVVEEGHNYTSLKGQNMVCGGLGCNNDSLVQQIFTAAQLDNYTRIGFAPSSWIDDYFDWIKPQSSCCRVYNSTDQFCNASVVDPTCIRCRPLTSEGKQRPQGEDFMRFLPMFLSDNPNPKCGKGGHAAYSSAVNILGNGSGVGATYFMTYHTVLQASADFIDAMQKARLIASNITRTMGLEASSYRVFPYSVFYVFYEQYLTVIDDTIFNLGVSLGAIFLVTVVLMGCELWATVIMCVTIAMILVNMFGVMWLWGISLNAVSLVNLVMSCGISVEFCSHITRAFTLSTKGSRVDRAEEALAHMGSSVFSGITLTKFGGIVVLAFAKSQIFQIFYFRMYLAIVLLGATHGLIFLPVLLSYIGPSINKAKSLATQERYKGTEREQLLNF.

Residues 1 to 22 (MSARGPAFGLLLLLLCPVQVFS) form the signal peptide. Over 23 to 269 (QSCVWYGECG…WRILGLDAMY (247 aa)) the chain is Lumenal. Intrachain disulfides connect C25–C74, C31–C42, C63–C109, C75–C113, C97–C238, C100–C160, C177–C184, C227–C243, and C240–C247. N41 provides a ligand contact to cholesterol. N70 carries an N-linked (GlcNAc...) asparagine glycan. Q79 contributes to the cholesterol binding site. 2 N-linked (GlcNAc...) asparagine glycosylation sites follow: N122 and N135. Residues 175 to 205 (LLCGREAQACNATNWIEYMFNKDNGQAPFTI) form an important for cholesterol binding and cholesterol transfer from NPC1 to liposomes region. N-linked (GlcNAc...) asparagine glycans are attached at residues N185 and N222. Residues 270 to 290 (VIMWSSYMAFLIVFFGAFFAV) traverse the membrane as a helical segment. At 291–350 (WCYRKRYFVSEYTPIDGNIAFSVNSSDKGQAFCCDPLGAAFERGLRRLFAQWGAFCVRHP) the chain is on the cytoplasmic side. The chain crosses the membrane as a helical span at residues 351–371 (GCVVFFSLAFIVACSSGLVFI). The Lumenal segment spans residues 372–621 (RVTTDPVDLW…ELNRESNSDL (250 aa)). Residues N415, N452, N459, and N478 are each glycosylated (N-linked (GlcNAc...) asparagine). 2 disulfide bridges follow: C468–C479 and C516–C533. Positions 620-785 (DLFTILISYA…ITCFVSLLGL (166 aa)) constitute an SSD domain. The chain crosses the membrane as a helical span at residues 622-642 (FTILISYAIMFLYISIALGHI). Residues 643–653 (KSCSRLLVDSK) are Cytoplasmic-facing. The helical transmembrane segment at 654-674 (ISLGIAGILIVLSSVACSLGI) threads the bilayer. Residues 675 to 677 (FSY) lie on the Lumenal side of the membrane. A helical membrane pass occupies residues 678 to 698 (IGVPLTLIVIEVIPFLVLAVG). The Cytoplasmic portion of the chain corresponds to 699 to 734 (VDNIFILVQTYQRDERLQGETLDQQLGRVLGEVAPS). A helical membrane pass occupies residues 735–755 (MFLSSFSETVAFFLGGLSVVP). Residues 756–759 (AVHT) lie on the Lumenal side of the membrane. A helical transmembrane segment spans residues 760–780 (FSLFAGMAVLIDFLLQITCFV). The Cytoplasmic portion of the chain corresponds to 781–832 (SLLGLDIKRQEKNRLDVVCCVQGAEDGAGVQASESCLFRFFKNSYAPLLLKD). A helical membrane pass occupies residues 833–853 (WMRPIVIAVFVGVLSFSIAVL). The Lumenal portion of the chain corresponds to 854-1097 (NKVEIGLDQS…EQYLTVIDDT (244 aa)). A glycan (N-linked (GlcNAc...) asparagine) is linked at N898. Residues C909 and C914 are joined by a disulfide bond. N-linked (GlcNAc...) asparagine glycans are attached at residues N916, N931, N961, N968, N1028, and N1063. Disulfide bonds link C956–C1011, C957–C979, and C967–C976. A helical transmembrane segment spans residues 1098 to 1118 (IFNLGVSLGAIFLVTVVLMGC). The Cytoplasmic portion of the chain corresponds to 1119–1123 (ELWAT). A helical transmembrane segment spans residues 1124–1144 (VIMCVTIAMILVNMFGVMWLW). G1145 is a topological domain (lumenal). The chain crosses the membrane as a helical span at residues 1146–1166 (ISLNAVSLVNLVMSCGISVEF). At 1167 to 1194 (CSHITRAFTLSTKGSRVDRAEEALAHMG) the chain is on the cytoplasmic side. A helical membrane pass occupies residues 1195–1215 (SSVFSGITLTKFGGIVVLAFA). Residues 1216–1226 (KSQIFQIFYFR) are Lumenal-facing. A helical membrane pass occupies residues 1227–1247 (MYLAIVLLGATHGLIFLPVLL). Over 1248 to 1277 (SYIGPSINKAKSLATQERYKGTEREQLLNF) the chain is Cytoplasmic. Residues 1274–1277 (LLNF) form a required for location in lysosomes region. The Di-leucine motif motif lies at 1274–1277 (LLNF).

This sequence belongs to the patched family. Interacts (via the second lumenal domain) with NPC2. Interacts with TMEM97; the interaction may decrease NPC1 availability to the cell. Interacts with TIM1. Interacts with SLC38A9; this interaction inhibits cholesterol-mediated mTORC1 activation via its sterol transport activity. Post-translationally, N-glycosylated. In terms of tissue distribution, detected in corpus luteum, granulosa cells and adrenal gland.

Its subcellular location is the late endosome membrane. It localises to the lysosome membrane. It carries out the reaction cholesterol(in) = cholesterol(out). Its function is as follows. Intracellular cholesterol transporter which acts in concert with NPC2 and plays an important role in the egress of cholesterol from the endosomal/lysosomal compartment. Unesterified cholesterol that has been released from LDLs in the lumen of the late endosomes/lysosomes is transferred by NPC2 to the cholesterol-binding pocket in the N-terminal domain of NPC1. Cholesterol binds to NPC1 with the hydroxyl group buried in the binding pocket. Binds oxysterol with higher affinity than cholesterol. May play a role in vesicular trafficking in glia, a process that may be crucial for maintaining the structural and functional integrity of nerve terminals. Inhibits cholesterol-mediated mTORC1 activation throught its interaction with SLC38A9. The sequence is that of NPC intracellular cholesterol transporter 1 from Sus scrofa (Pig).